Consider the following 214-residue polypeptide: uncharacterized protein (214 aa).

Belongs to the uracil-DNA glycosylase (UDG) superfamily.

This is an uncharacterized protein from Haemophilus influenzae (strain ATCC 51907 / DSM 11121 / KW20 / Rd).